Consider the following 632-residue polypeptide: Polygalacturonase non-catalytic subunit AroGP3 (632 aa).

Residues 1-27 (MHTKILLPSCILLLLLFTLSSLDVVVA) form the signal peptide. A propeptide spanning residues 28–109 (KDGDESGNPF…MCALDLLPSL (82 aa)) is cleaved from the precursor. N-linked (GlcNAc...) asparagine glycans are attached at residues Asn125, Asn143, Asn258, Asn280, Asn336, Asn371, and Asn389. Residues 417-631 (FFREKMLKSG…FENDMTWATA (215 aa)) form the BURP domain.

As to quaternary structure, interacts with polygalacturonase to form heterodimers.

Its subcellular location is the secreted. The protein localises to the extracellular space. It localises to the apoplast. The protein resides in the cell wall. In terms of biological role, non-catalytic subunit of polygalacturonase. This Solanum lycopersicum (Tomato) protein is Polygalacturonase non-catalytic subunit AroGP3 (GP3).